The sequence spans 122 residues: Sarcocystatin-A (122 aa).

The N-terminal stretch at 1–20 is a signal peptide; the sequence is MKYVLILCVITLATVAYAQP. Position 21 is a pyrrolidone carboxylic acid (Gln21). The Secondary area of contact signature appears at 67 to 71; it reads QVVSG.

This sequence belongs to the cystatin family.

Functionally, selectively inhibits the activity of cysteine proteinase of hemocytes, protecting developing adult tissue in pupae from attack by the proteinase. The protein is Sarcocystatin-A of Sarcophaga peregrina (Flesh fly).